Reading from the N-terminus, the 323-residue chain is Queuosine 5'-phosphate N-glycosylase/hydrolase (323 aa).

8 residues coordinate queuosine 5'-phosphate: asparagine 72, tyrosine 93, lysine 199, phenylalanine 229, aspartate 231, aspartate 298, tryptophan 302, and glutamine 306. Catalysis depends on aspartate 231, which acts as the Nucleophile or transition state stabilizer.

This sequence belongs to the QNG1 protein family. As to quaternary structure, monomer.

The catalysed reaction is queuosine 5'-phosphate + H2O = queuine + D-ribose 5-phosphate. In terms of biological role, catalyzes the hydrolysis of queuosine 5'-phosphate, releasing the nucleobase queuine (q). Is likely required for salvage of queuine from exogenous queuosine (Q) that is imported and then converted to queuosine 5'-phosphate intracellularly. In vitro, can also catalyze the release of the q base directly from Q as substrate; however, Q may not be the biologically relevant substrate. Shows a very low activity on queuosine 3',5'-diphosphate, and cannot release q from queuosine 3'-phosphate and from the 5'-nucleotides AMP, UMP, CMP or GMP, indicating specificity for the queuine base. The sequence is that of Queuosine 5'-phosphate N-glycosylase/hydrolase from Sphaerobacter thermophilus (strain ATCC 49802 / DSM 20745 / KCCM 41009 / NCIMB 13125 / S 6022).